We begin with the raw amino-acid sequence, 234 residues long: Ion-translocating oxidoreductase complex subunit E (234 aa).

5 consecutive transmembrane segments (helical) span residues 62-82, 92-112, 116-136, 151-171, and 205-225; these read LGLG…ISLF, IPIY…LMNA, TLYQ…IIIG, IWDG…LGAL, and SFLL…LLAI.

Belongs to the NqrDE/RnfAE family. The complex is composed of six subunits: RnfA, RnfB, RnfC, RnfD, RnfE and RnfG.

Its subcellular location is the cell inner membrane. Its function is as follows. Part of a membrane-bound complex that couples electron transfer with translocation of ions across the membrane. In Haemophilus influenzae (strain PittGG), this protein is Ion-translocating oxidoreductase complex subunit E.